Here is an 88-residue protein sequence, read N- to C-terminus: Large ribosomal subunit protein bL27 (88 aa).

The disordered stretch occupies residues 1-26 (MAHKKGASSSSNGRDSEAKRLGVKRF).

Belongs to the bacterial ribosomal protein bL27 family.

This Corynebacterium glutamicum (strain R) protein is Large ribosomal subunit protein bL27.